The primary structure comprises 231 residues: ATP phosphoribosyltransferase (231 aa).

Belongs to the ATP phosphoribosyltransferase family. Short subfamily. In terms of assembly, heteromultimer composed of HisG and HisZ subunits.

It localises to the cytoplasm. It catalyses the reaction 1-(5-phospho-beta-D-ribosyl)-ATP + diphosphate = 5-phospho-alpha-D-ribose 1-diphosphate + ATP. It functions in the pathway amino-acid biosynthesis; L-histidine biosynthesis; L-histidine from 5-phospho-alpha-D-ribose 1-diphosphate: step 1/9. Catalyzes the condensation of ATP and 5-phosphoribose 1-diphosphate to form N'-(5'-phosphoribosyl)-ATP (PR-ATP). Has a crucial role in the pathway because the rate of histidine biosynthesis seems to be controlled primarily by regulation of HisG enzymatic activity. This is ATP phosphoribosyltransferase from Brucella suis biovar 1 (strain 1330).